Consider the following 914-residue polypeptide: Protein translocase subunit SecA (914 aa).

ATP is bound by residues Gln-87, 105–109 (GEGKT), and Asp-508. Zn(2+) contacts are provided by Cys-898, Cys-900, Cys-909, and His-910.

Belongs to the SecA family. Monomer and homodimer. Part of the essential Sec protein translocation apparatus which comprises SecA, SecYEG and auxiliary proteins SecDF-YajC and YidC. Zn(2+) is required as a cofactor.

It is found in the cell inner membrane. The protein resides in the cytoplasm. The catalysed reaction is ATP + H2O + cellular proteinSide 1 = ADP + phosphate + cellular proteinSide 2.. Part of the Sec protein translocase complex. Interacts with the SecYEG preprotein conducting channel. Has a central role in coupling the hydrolysis of ATP to the transfer of proteins into and across the cell membrane, serving both as a receptor for the preprotein-SecB complex and as an ATP-driven molecular motor driving the stepwise translocation of polypeptide chains across the membrane. This Xylella fastidiosa (strain M23) protein is Protein translocase subunit SecA.